A 54-amino-acid polypeptide reads, in one-letter code: UPF0391 membrane protein Rmet_0093 (54 aa).

The next 2 membrane-spanning stretches (helical) occupy residues 5–25 (ALVFFIVALIAAIFGFGGIAA) and 30–50 (IAKILFLIFLVVAIVTFVMGL).

The protein belongs to the UPF0391 family.

The protein resides in the cell membrane. The chain is UPF0391 membrane protein Rmet_0093 from Cupriavidus metallidurans (strain ATCC 43123 / DSM 2839 / NBRC 102507 / CH34) (Ralstonia metallidurans).